The chain runs to 119 residues: Large ribosomal subunit protein bL20 (119 aa).

Belongs to the bacterial ribosomal protein bL20 family.

Its function is as follows. Binds directly to 23S ribosomal RNA and is necessary for the in vitro assembly process of the 50S ribosomal subunit. It is not involved in the protein synthesizing functions of that subunit. This chain is Large ribosomal subunit protein bL20, found in Nitrosomonas eutropha (strain DSM 101675 / C91 / Nm57).